Reading from the N-terminus, the 949-residue chain is MAM domain-containing glycosylphosphatidylinositol anchor protein 2 (949 aa).

The first 25 residues, 1–25, serve as a signal peptide directing secretion; sequence MDLVYGLVWLLTVLLEGISGQGVYA. Ig-like domains follow at residues 27 to 127 and 134 to 232; these read PTVR…IRVD and PVVT…KMVS. Intrachain disulfides connect C62/C110 and C159/C216. Residues N92, N213, and N237 are each glycosylated (N-linked (GlcNAc...) asparagine). Ig-like domains are found at residues 242-328, 340-436, 442-533, and 540-627; these read PSIK…NIIV, PDPY…VNIS, PNLT…ALVQ, and PAVE…FLVT. 2 disulfide bridges follow: C264/C310 and C359/C417. Residues N434, N443, N504, N610, and N703 are each glycosylated (N-linked (GlcNAc...) asparagine). Cystine bridges form between C465/C515 and C561/C611. Residues 638-738 enclose the Fibronectin type-III domain; the sequence is DTYNPVWQNR…TIRVIKYTGE (101 aa). The MAM domain occupies 739–914; that stretch reads FHCGFEDGNI…VSIAEGECAK (176 aa). Residue D924 is the site of GPI-anchor amidated aspartate attachment. The propeptide at 925-949 is removed in mature form; the sequence is GAVGILVHIWLFPVIILISILSPRR.

As to quaternary structure, interacts (through the Ig-like domains) with NLGN2.

It localises to the cell membrane. Its function is as follows. May be involved in cell-cell interactions. The chain is MAM domain-containing glycosylphosphatidylinositol anchor protein 2 (Mdga2) from Mus musculus (Mouse).